The sequence spans 741 residues: Double-stranded RNA-specific editase 1 (741 aa).

The segment at 1-79 (MDIEDEENMS…RRKTPGPVLP (79 aa)) is disordered. A Phosphoserine modification is found at serine 26. Over residues 33-49 (PGPGEGSQLSNGGGGGP) the composition is skewed to gly residues. Over residues 63-73 (SKYRLKKRRKT) the composition is skewed to basic residues. The DRBM 1 domain maps to 78-144 (LPKNALMQLN…AEKALRSFVQ (67 aa)). 2 interaction with substrate RNA regions span residues 83-88 (LMQLNE) and 104-105 (VH). Position 149 is a phosphoserine (serine 149). A DRBM 2 domain is found at 231-298 (PSGKNPVMIL…AQSALAAIFN (68 aa)). 2 interaction with substrate RNA regions span residues 237-242 (VMILNE) and histidine 259. In terms of domain architecture, A to I editase spans 370-737 (SVSTGTKCIN…VEKPTEQDQF (368 aa)). Histidine 394 is a Zn(2+) binding site. Glutamate 396 (proton donor) is an active-site residue. Residues arginine 400 and arginine 401 each contribute to the 1D-myo-inositol hexakisphosphate site. Residue cysteine 451 participates in Zn(2+) binding. Residues 486–518 (RPPGLLSDPSTSTFQGAGTTEPADRHPNRKARG) are disordered. Over residues 493 to 503 (DPSTSTFQGAG) the composition is skewed to polar residues. Cysteine 556 is a binding site for Zn(2+). The 1D-myo-inositol hexakisphosphate site is built by lysine 559, arginine 562, lysine 669, lysine 702, lysine 712, and lysine 730.

As to quaternary structure, homodimer. Homodimerization is essential for its catalytic activity. Can form heterodimers with isoform 5 of ADAR/ADAR1. 1D-myo-inositol hexakisphosphate is required as a cofactor. As to expression, highly expressed in brain and heart and at lower levels in placenta. Fair expression in lung, liver and kidney. Detected in brain, heart, kidney, lung and liver (at protein level). Highly expressed in hippocampus and colon. Expressed in pediatric astrocytomas and the protein has a decreased RNA-editing activity. The decrease in RNA editing correlates with the grade of malignancy of the tumors, with the high grade tumors showing lower editing is seen.

The protein resides in the nucleus. The protein localises to the nucleolus. The enzyme catalyses adenosine in double-stranded RNA + H2O + H(+) = inosine in double-stranded RNA + NH4(+). Functionally, catalyzes the hydrolytic deamination of adenosine to inosine in double-stranded RNA (dsRNA) referred to as A-to-I RNA editing. This may affect gene expression and function in a number of ways that include mRNA translation by changing codons and hence the amino acid sequence of proteins; pre-mRNA splicing by altering splice site recognition sequences; RNA stability by changing sequences involved in nuclease recognition; genetic stability in the case of RNA virus genomes by changing sequences during viral RNA replication; and RNA structure-dependent activities such as microRNA production or targeting or protein-RNA interactions. Can edit both viral and cellular RNAs and can edit RNAs at multiple sites (hyper-editing) or at specific sites (site-specific editing). Its cellular RNA substrates include: bladder cancer-associated protein (BLCAP), neurotransmitter receptors for glutamate (GRIA2 and GRIK2) and serotonin (HTR2C), GABA receptor (GABRA3) and potassium voltage-gated channel (KCNA1). Site-specific RNA editing of transcripts encoding these proteins results in amino acid substitutions which consequently alter their functional activities. Edits GRIA2 at both the Q/R and R/G sites efficiently but converts the adenosine in hotspot1 much less efficiently. Can exert a proviral effect towards human immunodeficiency virus type 1 (HIV-1) and enhances its replication via both an editing-dependent and editing-independent mechanism. The former involves editing of adenosines in the 5'UTR while the latter occurs via suppression of EIF2AK2/PKR activation and function. Can inhibit cell proliferation and migration and can stimulate exocytosis. Has a lower catalytic activity than isoform 2. In terms of biological role, has a higher catalytic activity than isoform 1. The sequence is that of Double-stranded RNA-specific editase 1 from Homo sapiens (Human).